We begin with the raw amino-acid sequence, 575 residues long: V-type ATP synthase alpha chain (575 aa).

Residue 238–245 coordinates ATP; sequence GPFGAGKT.

The protein belongs to the ATPase alpha/beta chains family.

The catalysed reaction is ATP + H2O + 4 H(+)(in) = ADP + phosphate + 5 H(+)(out). Produces ATP from ADP in the presence of a proton gradient across the membrane. The V-type alpha chain is a catalytic subunit. The polypeptide is V-type ATP synthase alpha chain (atpA) (Borreliella burgdorferi (strain ATCC 35210 / DSM 4680 / CIP 102532 / B31) (Borrelia burgdorferi)).